The following is a 277-amino-acid chain: Shikimate dehydrogenase (NADP(+)) (277 aa).

Residues 15 to 17 and threonine 64 each bind shikimate; that span reads SKS. Residue lysine 68 is the Proton acceptor of the active site. Residues asparagine 89 and aspartate 104 each contribute to the shikimate site. NADP(+) is bound by residues 129 to 133, 153 to 158, and methionine 217; these read GAGGA and NRTAKR. Tyrosine 219 is a shikimate binding site. Glycine 242 contacts NADP(+).

It belongs to the shikimate dehydrogenase family. In terms of assembly, homodimer.

The catalysed reaction is shikimate + NADP(+) = 3-dehydroshikimate + NADPH + H(+). It functions in the pathway metabolic intermediate biosynthesis; chorismate biosynthesis; chorismate from D-erythrose 4-phosphate and phosphoenolpyruvate: step 4/7. Involved in the biosynthesis of the chorismate, which leads to the biosynthesis of aromatic amino acids. Catalyzes the reversible NADPH linked reduction of 3-dehydroshikimate (DHSA) to yield shikimate (SA). In Hydrogenovibrio crunogenus (strain DSM 25203 / XCL-2) (Thiomicrospira crunogena), this protein is Shikimate dehydrogenase (NADP(+)).